Reading from the N-terminus, the 337-residue chain is UDP-N-acetylenolpyruvoylglucosamine reductase (337 aa).

The FAD-binding PCMH-type domain occupies 17 to 186; it reads IEAKAKQFIA…TSVIYKLTKR (170 aa). The active site involves Arg162. Residue Ser237 is the Proton donor of the active site. The active site involves Glu333.

This sequence belongs to the MurB family. FAD is required as a cofactor.

The protein localises to the cytoplasm. The catalysed reaction is UDP-N-acetyl-alpha-D-muramate + NADP(+) = UDP-N-acetyl-3-O-(1-carboxyvinyl)-alpha-D-glucosamine + NADPH + H(+). It functions in the pathway cell wall biogenesis; peptidoglycan biosynthesis. Its function is as follows. Cell wall formation. In Flavobacterium johnsoniae (strain ATCC 17061 / DSM 2064 / JCM 8514 / BCRC 14874 / CCUG 350202 / NBRC 14942 / NCIMB 11054 / UW101) (Cytophaga johnsonae), this protein is UDP-N-acetylenolpyruvoylglucosamine reductase.